A 50-amino-acid polypeptide reads, in one-letter code: Light-harvesting protein B-880 alpha chain (50 aa).

Residues Met-1 to Arg-12 are Cytoplasmic-facing. Residues Ala-13–Leu-33 form a helical membrane-spanning segment. His-29 is an a bacteriochlorophyll binding site. The Periplasmic portion of the chain corresponds to Ser-34 to Ala-50.

Belongs to the antenna complex alpha subunit family. In terms of assembly, the core complex is formed by different alpha and beta chains, binding bacteriochlorophyll molecules, and arranged most probably in tetrameric structures disposed around the reaction center. The non-pigmented gamma chains may constitute additional components.

It is found in the cell inner membrane. In terms of biological role, antenna complexes are light-harvesting systems, which transfer the excitation energy to the reaction centers. The polypeptide is Light-harvesting protein B-880 alpha chain (Rhodoblastus acidophilus (Rhodopseudomonas acidophila)).